Reading from the N-terminus, the 159-residue chain is MHISIAAVGKLKEKYLIAGVQEYTKRLSAYAKIEIIEVADEKTPERASELEEEQIKQREGERLLAKIPHDAHVIALAIEGKMKSSEQFAARLDELATYGKSKVVFVIGGSLGLSKQVMARADEALSFSKMTFPHQLMRLILLEQIYRAFRINRGEPYHK.

Residues Leu76, Gly108, and 127–132 (FSKMTF) contribute to the S-adenosyl-L-methionine site.

The protein belongs to the RNA methyltransferase RlmH family. As to quaternary structure, homodimer.

It localises to the cytoplasm. It catalyses the reaction pseudouridine(1915) in 23S rRNA + S-adenosyl-L-methionine = N(3)-methylpseudouridine(1915) in 23S rRNA + S-adenosyl-L-homocysteine + H(+). In terms of biological role, specifically methylates the pseudouridine at position 1915 (m3Psi1915) in 23S rRNA. The sequence is that of Ribosomal RNA large subunit methyltransferase H from Geobacillus thermodenitrificans (strain NG80-2).